A 91-amino-acid chain; its full sequence is Putative defective replication initiation protein (91 aa).

The chain is Putative defective replication initiation protein (repA1) from Escherichia coli (strain K12).